A 476-amino-acid polypeptide reads, in one-letter code: Stromelysin-2 (476 aa).

An N-terminal signal peptide occupies residues 1-17 (MEPLAILALLSLPICSA). Positions 18-99 (YPLHGAVTQG…PRCGVPDVGG (82 aa)) are cleaved as a propeptide — activation peptide. The Cysteine switch signature appears at 90–97 (PRCGVPDV). C92, H168, D170, H183, H196, and H218 together coordinate Zn(2+). E219 is a catalytic residue. 2 residues coordinate Zn(2+): H222 and H228. Hemopexin repeat units follow at residues 286-335 (PDKC…WPTL), 336-382 (PSDL…GFPP), 384-432 (VKKI…FPGI), and 433-476 (EPQV…WLLC). An intrachain disulfide couples C289 to C476.

This sequence belongs to the peptidase M10A family. The cofactor is Zn(2+). Requires Ca(2+) as cofactor. In terms of tissue distribution, expressed in small intestine. Weak levels in heart and lung.

The protein resides in the secreted. It is found in the extracellular space. The protein localises to the extracellular matrix. The enzyme catalyses Similar to stromelysin 1, but action on collagen types III, IV and V is weak.. Its function is as follows. Can degrade fibronectin, gelatins of type I, III, IV, and V; weakly collagens III, IV, and V. Activates procollagenase. The polypeptide is Stromelysin-2 (Mmp10) (Mus musculus (Mouse)).